The sequence spans 586 residues: Pyruvate kinase (586 aa).

Residue R32 coordinates substrate. Residues N34, S36, D66, and T67 each contribute to the K(+) site. N34–H37 provides a ligand contact to ATP. R73 and K156 together coordinate ATP. Position 222 (E222) interacts with Mg(2+). Substrate contacts are provided by G245, D246, and T278. Residue D246 coordinates Mg(2+).

The protein belongs to the pyruvate kinase family. In the C-terminal section; belongs to the PEP-utilizing enzyme family. Homotetramer. Requires Mg(2+) as cofactor. K(+) serves as cofactor.

It catalyses the reaction pyruvate + ATP = phosphoenolpyruvate + ADP + H(+). It functions in the pathway carbohydrate degradation; glycolysis; pyruvate from D-glyceraldehyde 3-phosphate: step 5/5. The polypeptide is Pyruvate kinase (pyk) (Sporosarcina psychrophila (Bacillus psychrophilus)).